The following is a 536-amino-acid chain: Pentatricopeptide repeat-containing protein At2g06000 (536 aa).

PPR repeat units follow at residues 102–136, 137–167, 170–200, 205–239, 240–274, 276–310, 311–345, 346–380, 381–415, 416–450, 451–485, and 486–523; these read SFWT…GVSP, NNRL…SFEV, CCMV…HLRF, DTKT…GCEP, DIVT…SVCS, DVVT…GIYP, TNVT…GCFP, DVVT…GMFP, NAFT…DIIP, QPFM…KCKP, DKIT…GCSP, and DKIT…NVVP.

The protein belongs to the PPR family. P subfamily.

The protein is Pentatricopeptide repeat-containing protein At2g06000 of Arabidopsis thaliana (Mouse-ear cress).